The chain runs to 77 residues: MKEQKWIHEGLITESLPNGMFRVRLDNEDLILGYVSGKIRRSFMRILPGDRVKVEVSRYDSTRGRIIYRLRNKDSKD.

The S1-like domain maps to 1-71; it reads MKEQKWIHEG…TRGRIIYRLR (71 aa).

Belongs to the IF-1 family. In terms of assembly, component of the 30S ribosomal translation pre-initiation complex which assembles on the 30S ribosome in the order IF-2 and IF-3, IF-1 and N-formylmethionyl-tRNA(fMet); mRNA recruitment can occur at any time during PIC assembly.

The protein resides in the plastid. It localises to the chloroplast. In terms of biological role, one of the essential components for the initiation of protein synthesis. Stabilizes the binding of IF-2 and IF-3 on the 30S subunit to which N-formylmethionyl-tRNA(fMet) subsequently binds. Helps modulate mRNA selection, yielding the 30S pre-initiation complex (PIC). Upon addition of the 50S ribosomal subunit IF-1, IF-2 and IF-3 are released leaving the mature 70S translation initiation complex. The polypeptide is Translation initiation factor IF-1, chloroplastic (Garrya elliptica (Wavyleaf silktassel)).